Here is a 52-residue protein sequence, read N- to C-terminus: Large ribosomal subunit protein bL32c (52 aa).

It belongs to the bacterial ribosomal protein bL32 family.

It localises to the plastid. The protein localises to the chloroplast. This is Large ribosomal subunit protein bL32c from Olimarabidopsis pumila (Dwarf rocket).